A 353-amino-acid chain; its full sequence is MPVKVRIALDAMGGDFGPSVIVPGAAISLGRHPDAEFLLFGDSALIEKELAAHPALKKVSRVIHTDVAVSMHDKPSQALRRGRKVSSMWLAIEAVKKGEADVAVSAGNTGALMAMARFCLRTLPGIDRPAIAATWPTVRGDSVVLDLGATIGGDAAHLKALAVMGAAMASVLFDLERPTVGLLNIGVEEIKGGEEIREAAELLRAMQSPRFEFVGFVEGDGIGKGAADVIVSEGFSGNIALKAAEGTARQISEYLKAAMSRTWRSKIGYLFARDAFKALKDKMDPNKSNGGVFLGLNGIVVKSHGGTSADGFAYAVDVGYDMVRYDLLTKINQTLNREAGALVSTPTAQEAVS.

It belongs to the PlsX family. In terms of assembly, homodimer. Probably interacts with PlsY.

It localises to the cytoplasm. The enzyme catalyses a fatty acyl-[ACP] + phosphate = an acyl phosphate + holo-[ACP]. It functions in the pathway lipid metabolism; phospholipid metabolism. Functionally, catalyzes the reversible formation of acyl-phosphate (acyl-PO(4)) from acyl-[acyl-carrier-protein] (acyl-ACP). This enzyme utilizes acyl-ACP as fatty acyl donor, but not acyl-CoA. The chain is Phosphate acyltransferase from Rhodopseudomonas palustris (strain HaA2).